Here is a 328-residue protein sequence, read N- to C-terminus: Tetraacyldisaccharide 4'-kinase (328 aa).

55-62 (TAGGNGKT) provides a ligand contact to ATP.

It belongs to the LpxK family.

It catalyses the reaction a lipid A disaccharide + ATP = a lipid IVA + ADP + H(+). It participates in glycolipid biosynthesis; lipid IV(A) biosynthesis; lipid IV(A) from (3R)-3-hydroxytetradecanoyl-[acyl-carrier-protein] and UDP-N-acetyl-alpha-D-glucosamine: step 6/6. Functionally, transfers the gamma-phosphate of ATP to the 4'-position of a tetraacyldisaccharide 1-phosphate intermediate (termed DS-1-P) to form tetraacyldisaccharide 1,4'-bis-phosphate (lipid IVA). The chain is Tetraacyldisaccharide 4'-kinase from Escherichia coli O45:K1 (strain S88 / ExPEC).